Reading from the N-terminus, the 571-residue chain is E3 ubiquitin-protein ligase CHFR (571 aa).

Positions 1-21 are disordered; that stretch reads MERPEEGKQSPPPQPWGRLLR. The region spanning 38–89 is the FHA domain; that stretch reads WTIGRRRGCDLSFPSNKLVSGDHCRIAVDEKSGQVTLEDTSTSGTVINKLKV. The segment at 113 to 138 is disordered; the sequence is EHRSGGGGISPKGSGPSVASDEVSSF. S152 carries the phosphoserine modification. Residues 212-251 form an RING-type zinc finger; sequence CIICQDLLHDCVSLQPCMHTFCAACYSGWMERSSLCPTCR. T294 carries the phosphothreonine modification. Residues 297–325 form a disordered region; that stretch reads MLQPKVRRSFSDEEGSSEDLLELSDVDSE. Acidic residues predominate over residues 308 to 325; it reads DEEGSSEDLLELSDVDSE. The PBZ-type zinc-finger motif lies at 540–562; the sequence is PDCYWGRNCRTQVKAHHAMKFNH.

This sequence belongs to the CHFR family. As to quaternary structure, interacts with HDAC1 and HDAC2. Interacts with PML (with sumoylated form of PML). Poly-ADP-ribosylated. In addition to binding non covalently poly(ADP-ribose) via its PBZ-type zinc finger, the protein is also covalently poly-ADP-ribosylated by PARP1. Post-translationally, autoubiquitinated; may regulate its cellular level. In terms of processing, phosphorylated by PKB. Phosphorylation may affect its E3 ligase activity.

The protein localises to the nucleus. The protein resides in the PML body. The enzyme catalyses S-ubiquitinyl-[E2 ubiquitin-conjugating enzyme]-L-cysteine + [acceptor protein]-L-lysine = [E2 ubiquitin-conjugating enzyme]-L-cysteine + N(6)-ubiquitinyl-[acceptor protein]-L-lysine.. Its pathway is protein modification; protein ubiquitination. In terms of biological role, E3 ubiquitin-protein ligase that functions in the antephase checkpoint by actively delaying passage into mitosis in response to microtubule poisons. Acts in early prophase before chromosome condensation, when the centrosome move apart from each other along the periphery of the nucleus. Probably involved in signaling the presence of mitotic stress caused by microtubule poisons by mediating the 'Lys-48'-linked ubiquitination of target proteins, leading to their degradation by the proteasome. Promotes the ubiquitination and subsequent degradation of AURKA and PLK1. Probably acts as a tumor suppressor, possibly by mediating the polyubiquitination of HDAC1, leading to its degradation. May also promote the formation of 'Lys-63'-linked polyubiquitin chains and functions with the specific ubiquitin-conjugating UBC13-MMS2 (UBE2N-UBE2V2) heterodimer. Substrates that are polyubiquitinated at 'Lys-63' are usually not targeted for degradation, but are rather involved in signaling cellular stress. The protein is E3 ubiquitin-protein ligase CHFR (CHFR) of Pongo abelii (Sumatran orangutan).